Reading from the N-terminus, the 510-residue chain is Bone morphogenetic protein 6 (510 aa).

An N-terminal signal peptide occupies residues 1–20 (MPGLGRRAQWLCWWWGLLCS). Residues 21-371 (CGPPPLRPPL…VSEVHVRTTR (351 aa)) constitute a propeptide that is removed on maturation. Disordered regions lie at residues 87 to 129 (PHRP…RLKS) and 143 to 199 (NDDE…PLTS). Over residues 106–116 (PQQQQQQQQQQ) the composition is skewed to low complexity. N-linked (GlcNAc...) asparagine glycans are attached at residues Asn238, Asn266, Asn383, Asn401, and Asn451. The disordered stretch occupies residues 370-402 (TRSASSRRRQQSRNRSTQSQDVSRGSGSSDYNG). Positions 390-401 (DVSRGSGSSDYN) are enriched in polar residues. Cystine bridges form between Cys409–Cys475, Cys438–Cys507, and Cys442–Cys509.

The protein belongs to the TGF-beta family. In terms of assembly, interacts with SOSTDC1. Interacts (when glycosylated) with type I receptor ACVR1; the interaction may induce HAMP expression. Interacts with type II receptor ACVR2B. Interacts with Hemojuvelin/HJV. Interacts with ERFE; the interaction inhibits BMP-induced transcription of HAMP. Interacts with BMPR1A/ALK3. Forms heterodimers with BMP2 in vitro; the heterodimer then binds to its receptor BMPR1A /ALK3 and may induce HAMP expression. As to expression, expressed in the lung. Low levels seen in the kidney.

It localises to the secreted. Functionally, growth factor of the TGF-beta superfamily that plays essential roles in many developmental processes including cartilage and bone formation. Also plays an important role in the regulation of HAMP/hepcidin expression and iron metabolism by acting as a ligand for hemojuvelin/HJV. Also acts to promote expression of HAMP, potentially via the interaction with its receptor BMPR1A/ALK3. Initiates the canonical BMP signaling cascade by associating with type I receptor ACVR1 and type II receptor ACVR2B. In turn, ACVR1 propagates signal by phosphorylating SMAD1/5/8 that travel to the nucleus and act as activators and repressors of transcription of target. Can also signal through non-canonical pathway such as TAZ-Hippo signaling cascade to modulate VEGF signaling by regulating VEGFR2 expression. This Mus musculus (Mouse) protein is Bone morphogenetic protein 6 (Bmp6).